The chain runs to 310 residues: Choline trimethylamine-lyase activating enzyme (310 aa).

The 288-residue stretch at 17–304 (YDGPGVRTLV…EACIRKYDFP (288 aa)) folds into the Radical SAM core domain. The [4Fe-4S] cluster site is built by Cys-31, Cys-35, Cys-38, Cys-57, Cys-60, Cys-63, and Cys-99. Residue 37–39 (WCS) coordinates S-adenosyl-L-methionine. 4Fe-4S ferredoxin-type domains follow at residues 48 to 77 (YQVL…ISAS) and 79 to 109 (LRHG…VVGE). Residues Gly-139, 188 to 190 (DVK), and His-264 contribute to the S-adenosyl-L-methionine site.

It belongs to the organic radical-activating enzymes family. In terms of assembly, monomer. The cofactor is [4Fe-4S] cluster.

It catalyses the reaction glycyl-[protein] + reduced [flavodoxin] + S-adenosyl-L-methionine = glycin-2-yl radical-[protein] + semiquinone [flavodoxin] + 5'-deoxyadenosine + L-methionine + H(+). It functions in the pathway amine and polyamine metabolism; choline degradation. Its function is as follows. Catalyzes activation of the choline trimethylamine-lyase CutC under anaerobic conditions by generation of an organic free radical on a glycine residue, via a homolytic cleavage of S-adenosyl-L-methionine (SAM). Is involved in the anaerobic choline utilization pathway that allows D.alaskensis to grow on choline as a source of carbon and energy. This is Choline trimethylamine-lyase activating enzyme from Oleidesulfovibrio alaskensis (strain ATCC BAA-1058 / DSM 17464 / G20) (Desulfovibrio alaskensis).